The primary structure comprises 466 residues: FBD-associated F-box protein At5g22730 (466 aa).

In terms of domain architecture, F-box spans 27–80 (EDLISKLPDSLITQILLYLPIKDIVRTSSLSSRWKSLWLLIPRLDLDSEEFQDY). One can recognise an FBD domain in the interval 385–436 (DEPIIFSSVPRCLVSSLESVEIKKFNGRPAKMEVARYFLENSGVLQKLVLHL).

This is FBD-associated F-box protein At5g22730 from Arabidopsis thaliana (Mouse-ear cress).